A 212-amino-acid chain; its full sequence is Protein-L-isoaspartate O-methyltransferase (212 aa).

Residue S60 is part of the active site.

This sequence belongs to the methyltransferase superfamily. L-isoaspartyl/D-aspartyl protein methyltransferase family.

Its subcellular location is the cytoplasm. The catalysed reaction is [protein]-L-isoaspartate + S-adenosyl-L-methionine = [protein]-L-isoaspartate alpha-methyl ester + S-adenosyl-L-homocysteine. Functionally, catalyzes the methyl esterification of L-isoaspartyl residues in peptides and proteins that result from spontaneous decomposition of normal L-aspartyl and L-asparaginyl residues. It plays a role in the repair and/or degradation of damaged proteins. The protein is Protein-L-isoaspartate O-methyltransferase of Pseudomonas putida (strain ATCC 700007 / DSM 6899 / JCM 31910 / BCRC 17059 / LMG 24140 / F1).